The primary structure comprises 196 residues: uncharacterized protein (196 aa).

Residues 15–22, 68–71, tyrosine 107, and 123–126 each bind FAD; these read SQGKFNKT, GWWM, and TWNA.

It belongs to the oxidoreductase MdaB family. It depends on FAD as a cofactor.

This is an uncharacterized protein from Schizosaccharomyces pombe (strain 972 / ATCC 24843) (Fission yeast).